The primary structure comprises 260 residues: Alpha- and beta-fibrinogenase OhS1 (260 aa).

Residues 1–18 form the signal peptide; the sequence is MALIRVLASLLILQLSYA. Residues 19 to 24 constitute a propeptide that is removed on maturation; the sequence is VTPFDR. The 224-residue stretch at 25–248 folds into the Peptidase S1 domain; it reads IIGGFECNEY…YIDWIEGIIA (224 aa). Intrachain disulfides connect cysteine 31/cysteine 163, cysteine 50/cysteine 66, cysteine 98/cysteine 255, cysteine 142/cysteine 209, cysteine 174/cysteine 188, and cysteine 199/cysteine 224. Residue asparagine 44 is glycosylated (N-linked (GlcNAc...) asparagine). Catalysis depends on histidine 65, which acts as the Charge relay system. N-linked (GlcNAc...) asparagine glycosylation occurs at asparagine 79. Aspartate 110 functions as the Charge relay system in the catalytic mechanism. N-linked (GlcNAc...) asparagine glycans are attached at residues asparagine 117 and asparagine 121. Catalysis depends on serine 203, which acts as the Charge relay system. Residue asparagine 250 is glycosylated (N-linked (GlcNAc...) asparagine).

It belongs to the peptidase S1 family. Snake venom subfamily. In terms of assembly, monomer. In terms of tissue distribution, expressed by the venom gland.

It localises to the secreted. With respect to regulation, completely inhibited by NPGB, PMSF, diisopropylfluorophosphate (DFP), benzamidine and soybean trypsin inhibitor. Not inhibited by EDTA. Its function is as follows. Snake venom serine protease that possesses potent fibrinogenolytic (on both alpha- (FGA) and beta-chains (FGB)) and amidolytic activities. Selectively cleaves Arg-|-Xaa or Lys-|-Xaa bonds. The polypeptide is Alpha- and beta-fibrinogenase OhS1 (Ophiophagus hannah (King cobra)).